The chain runs to 114 residues: UPF0212 protein UNCMA_00570 (114 aa).

The protein belongs to the UPF0212 family.

This chain is UPF0212 protein UNCMA_00570, found in Methanocella arvoryzae (strain DSM 22066 / NBRC 105507 / MRE50).